We begin with the raw amino-acid sequence, 67 residues long: Colostrum trypsin inhibitor (67 aa).

The region spanning 8–58 (CQLPQARGPCKAALLRYFYNSTSNACEPFTYGGCQGNNBNFETTEMCLRIC) is the BPTI/Kunitz inhibitor domain. 3 disulfide bridges follow: cysteine 8/cysteine 58, cysteine 17/cysteine 41, and cysteine 33/cysteine 54. The N-linked (GlcNAc...) asparagine glycan is linked to asparagine 27.

It localises to the secreted. The polypeptide is Colostrum trypsin inhibitor (Bos taurus (Bovine)).